Reading from the N-terminus, the 455-residue chain is Anaerobic glycerol-3-phosphate dehydrogenase subunit B (455 aa).

It belongs to the anaerobic G-3-P dehydrogenase subunit B family. As to quaternary structure, composed of a catalytic GlpA/B dimer and of membrane bound GlpC. The cofactor is FMN.

It catalyses the reaction a quinone + sn-glycerol 3-phosphate = dihydroxyacetone phosphate + a quinol. It participates in polyol metabolism; glycerol degradation via glycerol kinase pathway; glycerone phosphate from sn-glycerol 3-phosphate (anaerobic route): step 1/1. In terms of biological role, conversion of glycerol 3-phosphate to dihydroxyacetone. Uses fumarate or nitrate as electron acceptor. This is Anaerobic glycerol-3-phosphate dehydrogenase subunit B from Aliivibrio fischeri (strain MJ11) (Vibrio fischeri).